A 245-amino-acid polypeptide reads, in one-letter code: Small ribosomal subunit protein uS3 (245 aa).

A KH type-2 domain is found at 39 to 108; the sequence is IRNYIKKNYY…SVFVNVQEVK (70 aa).

It belongs to the universal ribosomal protein uS3 family. In terms of assembly, part of the 30S ribosomal subunit. Forms a tight complex with proteins S10 and S14.

Its function is as follows. Binds the lower part of the 30S subunit head. Binds mRNA in the 70S ribosome, positioning it for translation. The chain is Small ribosomal subunit protein uS3 from Dictyoglomus turgidum (strain DSM 6724 / Z-1310).